The sequence spans 907 residues: Androgen receptor (907 aa).

Residues methionine 1–lysine 545 form a modulating region. An interaction with ZNF318 region spans residues methionine 1–alanine 574. Disordered stretches follow at residues asparagine 36–leucine 152 and glutamine 200–glycine 231. The span at glutamine 55–glutamine 76 shows a compositional bias: low complexity. The residue at position 67 (serine 67) is a Phosphoserine; by CDK9. The residue at position 81 (serine 81) is a Phosphoserine. A compositionally biased stretch (polar residues) spans threonine 123–glutamine 134. Residues glutamine 200–serine 224 show a composition bias toward low complexity. Tyrosine 228 carries the post-translational modification Phosphotyrosine; by CSK. Serine 261 bears the Phosphoserine mark. Position 272 is a phosphotyrosine; by CSK and TNK2 (tyrosine 272). Phosphotyrosine; by CSK occurs at positions 310, 349, 360, and 365. Tyrosine 366 carries the phosphotyrosine; by CSK and TNK2 modification. A Glycyl lysine isopeptide (Lys-Gly) (interchain with G-Cter in SUMO) cross-link involves residue lysine 389. At tyrosine 396 the chain carries Phosphotyrosine; by CSK. A Glycyl lysine isopeptide (Lys-Gly) (interchain with G-Cter in SUMO) cross-link involves residue lysine 508. Residues tyrosine 522 and tyrosine 539 each carry the phosphotyrosine; by CSK modification. The interaction with LPXN stretch occupies residues tyrosine 539 to threonine 906. Positions threonine 546 to leucine 619 form a DNA-binding region, nuclear receptor. 2 NR C4-type zinc fingers span residues cysteine 547–cysteine 567 and cysteine 583–cysteine 607. Residues tyrosine 559 to valine 649 are interaction with HIPK3. An interaction with CCAR1 region spans residues glutamine 579–threonine 906. Residues methionine 612–threonine 906 are interaction with KAT7. Serine 638 is modified (phosphoserine; by STK4/MST1). In terms of domain architecture, NR LBD spans glutamate 656–isoleucine 887. 17beta-hydroxy-5alpha-androstan-3-one contacts are provided by asparagine 693 and arginine 740. Residues lysine 833 and lysine 835 each participate in a glycyl lysine isopeptide (Lys-Gly) (interchain with G-Cter in ubiquitin) cross-link. 17beta-hydroxy-5alpha-androstan-3-one is bound at residue threonine 865. Position 903 is a phosphotyrosine; by CSK (tyrosine 903).

The protein belongs to the nuclear hormone receptor family. NR3 subfamily. In terms of assembly, binds DNA as a homodimer. Part of a ternary complex containing AR, EFCAB6/DJBP and PARK7. Interacts with HIPK3 and NR0B2 in the presence of androgen. The ligand binding domain interacts with KAT7/HBO1 in the presence of dihydrotestosterone. Interacts with EFCAB6/DJBP, PQBP1, RANBP9, RBAK, SPDEF, SRA1, TGFB1I1 and RREB1. Interacts with ZMIZ1/ZIMP10 and ZMIZ2/ZMIP7 which both enhance its transactivation activity. Interacts with SLC30A9 and RAD54L2/ARIP4. Interacts with MACROD1 (via macro domain). Interacts via the ligand-binding domain with LXXLL and FXXLF motifs from NCOA1, NCOA2, NCOA3 and MAGEA11. Interacts (via nuclear receptor DNA binding domain and nuclear receptor ligand binding domain) with NCOA4. The AR N-terminal poly-Gln region binds Ran resulting in enhancement of AR-mediated transactivation. Ran-binding decreases as the poly-Gln length increases. Interacts with HIP1 (via coiled coil domain). Interacts (via ligand-binding domain) with TRIM68. Interacts with TNK2. Interacts with USP26. Interacts with RNF6. Interacts (regulated by RNF6 probably through polyubiquitination) with RNF14; regulates AR transcriptional activity. Interacts with PRMT2 and TRIM24. Interacts with RACK1. Interacts with RANBP10; this interaction enhances dihydrotestosterone-induced AR transcriptional activity. Interacts with PRPF6 in a hormone-independent way; this interaction enhances dihydrotestosterone-induced AR transcriptional activity. Interacts with STK4/MST1. Interacts with ZIPK/DAPK3. Interacts with LPXN. Interacts with MAK. Part of a complex containing AR, MAK and NCOA3. Interacts with CRY1. Interacts with CCAR1 and GATA2. Interacts with ZNF318. Interacts with BUD31. Interacts with ARID4A. Interacts with ARID4B. Interacts (via NR LBD domain) with ZBTB7A; the interaction is direct and androgen-dependent. Interacts with NCOR1. Interacts with NCOR2. Interacts witH CRY2 in a ligand-dependent manner. In terms of processing, phosphorylated in prostate cancer cells in response to several growth factors including EGF. Phosphorylation is induced by c-Src kinase (CSK). Tyr-522 is one of the major phosphorylation sites and an increase in phosphorylation and Src kinase activity is associated with prostate cancer progression. Phosphorylation by TNK2 enhances the DNA-binding and transcriptional activity. Phosphorylation at Ser-67 by CDK9 regulates AR promoter selectivity and cell growth. Post-translationally, sumoylated on Lys-389 (major) and Lys-508. Ubiquitinated. Deubiquitinated by USP26. 'Lys-6' and 'Lys-27'-linked polyubiquitination by RNF6 modulates AR transcriptional activity and specificity. Palmitoylated by ZDHHC7 and ZDHHC21. Palmitoylation is required for plasma membrane targeting and for rapid intracellular signaling via ERK and AKT kinases and cAMP generation.

It is found in the nucleus. It localises to the cytoplasm. Functionally, steroid hormone receptors are ligand-activated transcription factors that regulate eukaryotic gene expression and affect cellular proliferation and differentiation in target tissues. Transcription factor activity is modulated by bound coactivator and corepressor proteins like ZBTB7A that recruits NCOR1 and NCOR2 to the androgen response elements/ARE on target genes, negatively regulating androgen receptor signaling and androgen-induced cell proliferation. Transcription activation is also down-regulated by NR0B2. Activated, but not phosphorylated, by HIPK3 and ZIPK/DAPK3. This chain is Androgen receptor (AR), found in Canis lupus familiaris (Dog).